Here is a 343-residue protein sequence, read N- to C-terminus: Glyceraldehyde-3-phosphate dehydrogenase (343 aa).

Residues 13 to 14 (TI) and Gly-111 each bind NAD(+). 140–142 (SCN) contacts D-glyceraldehyde 3-phosphate. The active-site Nucleophile is the Cys-141. Arg-169 contributes to the NAD(+) binding site. 195-196 (HA) serves as a coordination point for D-glyceraldehyde 3-phosphate. Gln-302 provides a ligand contact to NAD(+).

It belongs to the glyceraldehyde-3-phosphate dehydrogenase family. As to quaternary structure, homotetramer.

Its subcellular location is the cytoplasm. The catalysed reaction is D-glyceraldehyde 3-phosphate + phosphate + NADP(+) = (2R)-3-phospho-glyceroyl phosphate + NADPH + H(+). It carries out the reaction D-glyceraldehyde 3-phosphate + phosphate + NAD(+) = (2R)-3-phospho-glyceroyl phosphate + NADH + H(+). It functions in the pathway carbohydrate degradation; glycolysis; pyruvate from D-glyceraldehyde 3-phosphate: step 1/5. The chain is Glyceraldehyde-3-phosphate dehydrogenase from Hyperthermus butylicus (strain DSM 5456 / JCM 9403 / PLM1-5).